The following is a 209-amino-acid chain: Uracil phosphoribosyltransferase (209 aa).

Residues Arg-79, Arg-104, and 131–139 (DPMLATGGS) contribute to the 5-phospho-alpha-D-ribose 1-diphosphate site. Residues Ile-194 and 199–201 (GDA) each bind uracil. Asp-200 is a binding site for 5-phospho-alpha-D-ribose 1-diphosphate.

It belongs to the UPRTase family. It depends on Mg(2+) as a cofactor.

It catalyses the reaction UMP + diphosphate = 5-phospho-alpha-D-ribose 1-diphosphate + uracil. Its pathway is pyrimidine metabolism; UMP biosynthesis via salvage pathway; UMP from uracil: step 1/1. Allosterically activated by GTP. In terms of biological role, catalyzes the conversion of uracil and 5-phospho-alpha-D-ribose 1-diphosphate (PRPP) to UMP and diphosphate. This is Uracil phosphoribosyltransferase from Streptococcus sanguinis (strain SK36).